A 131-amino-acid chain; its full sequence is Fluoride-specific ion channel FluC 2 (131 aa).

The next 4 helical transmembrane spans lie at 5–25 (SAVF…NLWI), 35–55 (WLEN…FMIG), 59–79 (PLLS…MSTF), and 95–115 (LLYV…GVFV). Na(+) is bound by residues glycine 71 and threonine 74.

Belongs to the fluoride channel Fluc/FEX (TC 1.A.43) family.

The protein localises to the cell membrane. The catalysed reaction is fluoride(in) = fluoride(out). With respect to regulation, na(+) is not transported, but it plays an essential structural role and its presence is essential for fluoride channel function. Functionally, fluoride-specific ion channel. Important for reducing fluoride concentration in the cell, thus reducing its toxicity. In Bacillus subtilis (strain 168), this protein is Fluoride-specific ion channel FluC 2.